The chain runs to 28 residues: Ornatin-D (28 aa).

This sequence belongs to the ornatin family.

Its subcellular location is the secreted. In terms of biological role, potent inhibitor of fibrinogen interaction with platelet receptors expressed on glycoprotein IIb-IIIa complex. May prevent blood from clotting during either feeding and/or storage of ingested blood. This Placobdella ornata (Turtle leech) protein is Ornatin-D.